The primary structure comprises 303 residues: Diaminopimelate epimerase (303 aa).

The substrate site is built by asparagine 15, glutamine 47, and asparagine 67. Residue cysteine 76 is the Proton donor of the active site. Substrate is bound by residues 77 to 78 (GN), asparagine 163, asparagine 197, and 215 to 216 (ER). The Proton acceptor role is filled by cysteine 224. 225–226 (GS) is a binding site for substrate. Positions 279–303 (DPATGEWSRDTQGLQGSGNADRGTA) are disordered.

Belongs to the diaminopimelate epimerase family. As to quaternary structure, homodimer.

The protein resides in the cytoplasm. It catalyses the reaction (2S,6S)-2,6-diaminopimelate = meso-2,6-diaminopimelate. Its pathway is amino-acid biosynthesis; L-lysine biosynthesis via DAP pathway; DL-2,6-diaminopimelate from LL-2,6-diaminopimelate: step 1/1. In terms of biological role, catalyzes the stereoinversion of LL-2,6-diaminopimelate (L,L-DAP) to meso-diaminopimelate (meso-DAP), a precursor of L-lysine and an essential component of the bacterial peptidoglycan. This chain is Diaminopimelate epimerase, found in Brucella canis (strain ATCC 23365 / NCTC 10854 / RM-666).